We begin with the raw amino-acid sequence, 167 residues long: Heme-degrading monooxygenase (167 aa).

The important for catalysis stretch occupies residues 1-50 (MKKVFITTGTEHYLRQLMANYTGGNVTLLQNFSQSLLYQESTGEKLFQEG). One can recognise an ABM domain in the interval 67–154 (VVVFEYIHLR…NNTQSGFSHE (88 aa)).

It belongs to the antibiotic biosynthesis monooxygenase family. Monomer.

The protein resides in the cytoplasm. Functionally, catalyzes the degradation of heme to biliverdin in the presence of a suitable electron donor such as ascorbate, with the subsequent release of iron. Hardly any CO is released by the heme degradation reaction. Binds heme. Allows bacterial pathogens to use the host heme as an iron source. Release of iron from heme may play a crucial role in the pathogenicity of L.monocytogenes. The protein is Heme-degrading monooxygenase of Listeria monocytogenes serovar 1/2a (strain ATCC BAA-679 / EGD-e).